A 409-amino-acid polypeptide reads, in one-letter code: Broad specificity amino-acid racemase (409 aa).

The signal sequence occupies residues M1–A24. Cysteines 71 and 97 form a disulfide. K75 serves as the catalytic Proton acceptor. An N6-(pyridoxal phosphate)lysine modification is found at K75. R174 is a binding site for substrate. The active-site Proton acceptor is Y301. Position 349 (M349) interacts with substrate.

The protein belongs to the alanine racemase family. Bsr subfamily. As to quaternary structure, monomer. Forms a head-to-tail homodimer in the structure. It depends on pyridoxal 5'-phosphate as a cofactor.

The protein localises to the periplasm. The enzyme catalyses an L-alpha-amino acid = a D-alpha-amino acid. The catalysed reaction is L-lysine = D-lysine. It carries out the reaction L-arginine = D-arginine. It catalyses the reaction L-alanine = D-alanine. Its activity is regulated as follows. Activity is enhanced by Co(2+), Mn(2+) and Sr(2+), and decreased by Cu(2+). Its function is as follows. Amino-acid racemase that catalyzes the interconversion of L-lysine and D-lysine, and L-arginine and D-arginine. To a lesser extent, is also able to interconvert alanine and isoleucine enantiomers. In Pseudomonas putida (Arthrobacter siderocapsulatus), this protein is Broad specificity amino-acid racemase.